The sequence spans 222 residues: MYSNITKAWHEDPVKEITSKLSKGYFNANKNNKFENERSSEISDKILDKNPKYNFLSTESDLVSLTENNLHLLSNNSAHISDLNSSEFGNYAPVDFATKIKPHNISNKHLPLVSSKDSECDFSMNHIKHCNICYGRLKELINNKVSKKMDEIILDNKIKQIQSFVPSLDNLSKSNLTTDQSMNNQNRNTISNNDLWKTALIIIIGIVIILLLIIVMIKTVCK.

N-linked (GlcNAc...) asparagine; by host glycosylation is found at asparagine 4, asparagine 75, asparagine 84, asparagine 104, asparagine 170, and asparagine 175. Residues 200 to 220 (LIIIIGIVIILLLIIVMIKTV) traverse the membrane as a helical segment.

The protein localises to the membrane. This is an uncharacterized protein from Acanthamoeba polyphaga (Amoeba).